A 211-amino-acid chain; its full sequence is Protein-L-isoaspartate O-methyltransferase (211 aa).

The active site involves Ser-62.

It belongs to the methyltransferase superfamily. L-isoaspartyl/D-aspartyl protein methyltransferase family.

It localises to the cytoplasm. It catalyses the reaction [protein]-L-isoaspartate + S-adenosyl-L-methionine = [protein]-L-isoaspartate alpha-methyl ester + S-adenosyl-L-homocysteine. Its function is as follows. Catalyzes the methyl esterification of L-isoaspartyl residues in peptides and proteins that result from spontaneous decomposition of normal L-aspartyl and L-asparaginyl residues. It plays a role in the repair and/or degradation of damaged proteins. The protein is Protein-L-isoaspartate O-methyltransferase of Shewanella putrefaciens (strain CN-32 / ATCC BAA-453).